The chain runs to 2063 residues: Rho guanine nucleotide exchange factor 17 (2063 aa).

Disordered stretches follow at residues 22–365 (WSGG…MSDS), 380–466 (YLAS…SNPD), 485–581 (LRVR…AEED), and 602–958 (IQRM…RHVR). A compositionally biased stretch (low complexity) spans 65–76 (PLAAPAQPRPLR). The span at 87 to 96 (RRFDAPRLDD) shows a compositional bias: basic and acidic residues. Residues 108–122 (PAAAEEAAEGPARGA) show a composition bias toward low complexity. Ser-142 and Ser-152 each carry phosphoserine. The segment covering 225-250 (AGARASCSSSSIAASYPVSRSRAASS) has biased composition (low complexity). At Ser-310 the chain carries Phosphoserine. Over residues 313–323 (LNLSSMNSAGV) the composition is skewed to polar residues. Ser-326, Ser-332, Ser-383, Ser-387, Ser-395, Ser-410, and Ser-420 each carry phosphoserine. Polar residues predominate over residues 388–397 (RGSSRYSSTE). The span at 445–456 (ALRDGGFEPEKS) shows a compositional bias: basic and acidic residues. A phosphoserine mark is found at Ser-461 and Ser-546. Low complexity predominate over residues 562–573 (SALKSSSSELLL). Phosphoserine is present on Ser-619. Residues 671–680 (LSSSSAQTNH) show a composition bias toward polar residues. A Phosphoserine modification is found at Ser-696. A phosphothreonine mark is found at Thr-699 and Thr-702. Ser-735 bears the Phosphoserine mark. The span at 754 to 765 (SVDSNLLGSLSP) shows a compositional bias: polar residues. Positions 827–836 (SLSDPSRRGE) are enriched in basic and acidic residues. Position 914 is a phosphoserine (Ser-914). Over residues 917–928 (LIRRGSKKRPAR) the composition is skewed to basic residues. Over residues 930–939 (SHQELRRDEG) the composition is skewed to basic and acidic residues. Ser-961 and Ser-1002 each carry phosphoserine. The segment at 1034-1060 (APPSAEAKPPEAARPADEPTPASKCCS) is disordered. The segment covering 1041 to 1050 (KPPEAARPAD) has biased composition (basic and acidic residues). A DH domain is found at 1066–1254 (MRKHVAMTLL…KQVAERINKG (189 aa)). The residue at position 1331 (Ser-1331) is a Phosphoserine. Disordered stretches follow at residues 1564–1584 (HREP…PAGP), 1616–1719 (GLEM…SSHG), 1991–2020 (TPPP…PAPA), and 2036–2055 (FRLS…DDST). Over residues 1568–1582 (PPSLRSPPETAPEPA) the composition is skewed to pro residues. Over residues 1644–1680 (SPSPSGTLQSQASRSTISSSFGNEETPSSKEATAETT) the composition is skewed to low complexity. A compositionally biased stretch (basic and acidic residues) spans 2004–2013 (PSLEHRDSPW).

As to expression, highly expressed in the heart.

In terms of biological role, acts as a guanine nucleotide exchange factor (GEF) for RhoA GTPases. The protein is Rho guanine nucleotide exchange factor 17 (ARHGEF17) of Homo sapiens (Human).